The sequence spans 300 residues: GTPase Era (300 aa).

Residues 6-173 (HSGFVAILGR…IESLVNTLPE (168 aa)) form the Era-type G domain. The G1 stretch occupies residues 14–21 (GRPNVGKS). Residue 14-21 (GRPNVGKS) participates in GTP binding. A G2 region spans residues 40-44 (QTTRN). A G3 region spans residues 61 to 64 (DTPG). GTP is bound by residues 61-65 (DTPGI) and 123-126 (NKID). Positions 123 to 126 (NKID) are G4. The tract at residues 152-154 (ISA) is G5. The 78-residue stretch at 204 to 281 (TREEVPHSVA…YLELWVKVQP (78 aa)) folds into the KH type-2 domain.

Belongs to the TRAFAC class TrmE-Era-EngA-EngB-Septin-like GTPase superfamily. Era GTPase family. In terms of assembly, monomer.

It localises to the cytoplasm. The protein resides in the cell membrane. Functionally, an essential GTPase that binds both GDP and GTP, with rapid nucleotide exchange. Plays a role in 16S rRNA processing and 30S ribosomal subunit biogenesis and possibly also in cell cycle regulation and energy metabolism. In Ligilactobacillus salivarius (strain UCC118) (Lactobacillus salivarius), this protein is GTPase Era.